We begin with the raw amino-acid sequence, 174 residues long: Secreted protein A (174 aa).

A signal peptide spans 1–19 (MRLLITLFAIFALFNCSLA). N156 is a glycosylation site (N-linked (GlcNAc...) asparagine).

The protein belongs to the Sct family. In terms of processing, probably contains disulfide bonds.

The protein resides in the secreted. It is found in the extracellular vesicle. This is Secreted protein A (p17) from Dictyostelium discoideum (Social amoeba).